We begin with the raw amino-acid sequence, 250 residues long: NAD(P)H-quinone oxidoreductase subunit K, chloroplastic (250 aa).

[4Fe-4S] cluster is bound by residues C61, C62, C126, and C157.

It belongs to the complex I 20 kDa subunit family. As to quaternary structure, NDH is composed of at least 16 different subunits, 5 of which are encoded in the nucleus. [4Fe-4S] cluster serves as cofactor.

It is found in the plastid. It localises to the chloroplast thylakoid membrane. It carries out the reaction a plastoquinone + NADH + (n+1) H(+)(in) = a plastoquinol + NAD(+) + n H(+)(out). The enzyme catalyses a plastoquinone + NADPH + (n+1) H(+)(in) = a plastoquinol + NADP(+) + n H(+)(out). In terms of biological role, NDH shuttles electrons from NAD(P)H:plastoquinone, via FMN and iron-sulfur (Fe-S) centers, to quinones in the photosynthetic chain and possibly in a chloroplast respiratory chain. The immediate electron acceptor for the enzyme in this species is believed to be plastoquinone. Couples the redox reaction to proton translocation, and thus conserves the redox energy in a proton gradient. The protein is NAD(P)H-quinone oxidoreductase subunit K, chloroplastic of Angiopteris evecta (Mule's foot fern).